The following is a 470-amino-acid chain: Pyruvate kinase I (470 aa).

Position 32 (arginine 32) interacts with substrate. K(+)-binding residues include asparagine 34, serine 36, aspartate 66, and threonine 67. Asparagine 34–histidine 37 is an ATP binding site. Position 73 (arginine 73) interacts with ATP. Lysine 76 carries the post-translational modification N6-acetyllysine. Lysine 156 lines the ATP pocket. Glutamate 222 serves as a coordination point for Mg(2+). Positions 245, 246, and 278 each coordinate substrate. Aspartate 246 is a binding site for Mg(2+). N6-acetyllysine is present on lysine 319.

This sequence belongs to the pyruvate kinase family. Homotetramer. Requires Mg(2+) as cofactor. It depends on K(+) as a cofactor.

It carries out the reaction pyruvate + ATP = phosphoenolpyruvate + ADP + H(+). It participates in carbohydrate degradation; glycolysis; pyruvate from D-glyceraldehyde 3-phosphate: step 5/5. This Escherichia coli O157:H7 protein is Pyruvate kinase I (pykF).